Reading from the N-terminus, the 283-residue chain is Elongation factor Ts (283 aa).

The tract at residues 79 to 82 (TDFV) is involved in Mg(2+) ion dislocation from EF-Tu.

The protein belongs to the EF-Ts family.

The protein localises to the cytoplasm. Functionally, associates with the EF-Tu.GDP complex and induces the exchange of GDP to GTP. It remains bound to the aminoacyl-tRNA.EF-Tu.GTP complex up to the GTP hydrolysis stage on the ribosome. The chain is Elongation factor Ts from Shewanella sp. (strain ANA-3).